We begin with the raw amino-acid sequence, 35 residues long: Tamulustoxin (35 aa).

3 disulfide bridges follow: C2–C22, C7–C31, and C11–C33.

In terms of tissue distribution, expressed by the venom gland.

The protein resides in the secreted. In terms of biological role, blocks Kv1.6/KCNA6 potassium channels. In Hottentotta tamulus (Eastern Indian scorpion), this protein is Tamulustoxin.